The following is a 109-amino-acid chain: uncharacterized protein (109 aa).

3 helical membrane passes run 16-36 (HPHL…EIYF), 52-72 (LIVL…LIAL), and 87-107 (ILLC…AYPV).

The protein localises to the cell membrane. This is an uncharacterized protein from Salmonella typhimurium (strain LT2 / SGSC1412 / ATCC 700720).